The primary structure comprises 231 residues: Casparian strip membrane protein 1 (231 aa).

At 1–69 the chain is on the cytoplasmic side; sequence MSTSETATVI…FRQSDRGSRC (69 aa). Residues 70–90 form a helical membrane-spanning segment; the sequence is LAFLDFLLRIAAFGPALAAAI. Residues 91-117 are Extracellular-facing; that stretch reads ATGTSDETLSVFTEFFQFRARFDDFPA. The helical transmembrane segment at 118-138 threads the bilayer; that stretch reads FLFLMVANAIAAGYLVLSLPF. At 139-152 the chain is on the cytoplasmic side; sequence SAVVVLRPQATGLR. Residues 153 to 173 form a helical membrane-spanning segment; it reads LLLLVCDTIMIGLLTAAAAAA. At 174-207 the chain is on the extracellular side; it reads AAIVELAHNGNERANWVAICMQFHGFCQRTSGAV. Residues 208-228 form a helical membrane-spanning segment; that stretch reads VASFLSVFLFLLLVVLAAFAI. The Cytoplasmic portion of the chain corresponds to 229–231; sequence RKR.

This sequence belongs to the Casparian strip membrane proteins (CASP) family. As to quaternary structure, homodimer and heterodimers.

The protein resides in the cell membrane. Functionally, regulates membrane-cell wall junctions and localized cell wall deposition. Required for establishment of the Casparian strip membrane domain (CSD) and the subsequent formation of Casparian strips, a cell wall modification of the root endodermis that determines an apoplastic barrier between the intraorganismal apoplasm and the extraorganismal apoplasm and prevents lateral diffusion. The polypeptide is Casparian strip membrane protein 1 (Brachypodium distachyon (Purple false brome)).